We begin with the raw amino-acid sequence, 375 residues long: Actin, cytoplasmic (375 aa).

It belongs to the actin family.

It is found in the cytoplasm. The protein resides in the cytoskeleton. The catalysed reaction is ATP + H2O = ADP + phosphate + H(+). Actins are highly conserved proteins that are involved in various types of cell motility and are ubiquitously expressed in all eukaryotic cells. In Sterkiella nova (Ciliate), this protein is Actin, cytoplasmic (MIC-ACT-1).